A 230-amino-acid polypeptide reads, in one-letter code: Orotidine 5'-phosphate decarboxylase (230 aa).

Residues Asp-11, Lys-34, 61–70, Thr-117, Arg-179, Gln-188, Gly-208, and Arg-209 contribute to the substrate site; that span reads DLKLHDIPNT. Lys-63 (proton donor) is an active-site residue.

The protein belongs to the OMP decarboxylase family. Type 1 subfamily. As to quaternary structure, homodimer.

The enzyme catalyses orotidine 5'-phosphate + H(+) = UMP + CO2. It functions in the pathway pyrimidine metabolism; UMP biosynthesis via de novo pathway; UMP from orotate: step 2/2. In terms of biological role, catalyzes the decarboxylation of orotidine 5'-monophosphate (OMP) to uridine 5'-monophosphate (UMP). In Streptococcus pyogenes serotype M1, this protein is Orotidine 5'-phosphate decarboxylase.